Here is a 239-residue protein sequence, read N- to C-terminus: MKVIVTENKIQGSAKAFEIFEKGIKNGAKVLGLATGSTPEILYQNWVKSDLNCDDLTSINLDEYVGLTPDNPQSYHYFMQKHLFDKKTFKKTYIPDGMTKDVPAYCKEYDQIIKDNPIDIQLLGIGQNGHIAFNEPGTPFDIGTHEVKLTENTIKANARFFDNEDEVPKSAICMGTANIMDSKKIVLMAFGEKKAKAIKEMIEGPITEEVPASILQKHPDVTVIVDTYAAQELDDKYKN.

Catalysis depends on D62, which acts as the Proton acceptor; for enolization step. Catalysis depends on N128, which acts as the For ring-opening step. H130 serves as the catalytic Proton acceptor; for ring-opening step. E135 acts as the For ring-opening step in catalysis.

Belongs to the glucosamine/galactosamine-6-phosphate isomerase family. NagB subfamily.

The enzyme catalyses alpha-D-glucosamine 6-phosphate + H2O = beta-D-fructose 6-phosphate + NH4(+). Its pathway is amino-sugar metabolism; N-acetylneuraminate degradation; D-fructose 6-phosphate from N-acetylneuraminate: step 5/5. Catalyzes the reversible isomerization-deamination of glucosamine 6-phosphate (GlcN6P) to form fructose 6-phosphate (Fru6P) and ammonium ion. In Lactobacillus acidophilus (strain ATCC 700396 / NCK56 / N2 / NCFM), this protein is Glucosamine-6-phosphate deaminase.